The following is a 360-amino-acid chain: Dual-specificity RNA methyltransferase RlmN (360 aa).

Glutamate 93 functions as the Proton acceptor in the catalytic mechanism. In terms of domain architecture, Radical SAM core spans 99–326 (EEDRNTLCIS…VITRSSRGAD (228 aa)). A disulfide bridge connects residues cysteine 106 and cysteine 331. [4Fe-4S] cluster contacts are provided by cysteine 113, cysteine 117, and cysteine 120. Residues 158-159 (GE), serine 190, 212-214 (SLN), and asparagine 288 each bind S-adenosyl-L-methionine. The S-methylcysteine intermediate role is filled by cysteine 331.

Belongs to the radical SAM superfamily. RlmN family. [4Fe-4S] cluster serves as cofactor.

The protein localises to the cytoplasm. The enzyme catalyses adenosine(2503) in 23S rRNA + 2 reduced [2Fe-2S]-[ferredoxin] + 2 S-adenosyl-L-methionine = 2-methyladenosine(2503) in 23S rRNA + 5'-deoxyadenosine + L-methionine + 2 oxidized [2Fe-2S]-[ferredoxin] + S-adenosyl-L-homocysteine. The catalysed reaction is adenosine(37) in tRNA + 2 reduced [2Fe-2S]-[ferredoxin] + 2 S-adenosyl-L-methionine = 2-methyladenosine(37) in tRNA + 5'-deoxyadenosine + L-methionine + 2 oxidized [2Fe-2S]-[ferredoxin] + S-adenosyl-L-homocysteine. Its function is as follows. Specifically methylates position 2 of adenine 2503 in 23S rRNA and position 2 of adenine 37 in tRNAs. m2A2503 modification seems to play a crucial role in the proofreading step occurring at the peptidyl transferase center and thus would serve to optimize ribosomal fidelity. In Geobacter sulfurreducens (strain ATCC 51573 / DSM 12127 / PCA), this protein is Dual-specificity RNA methyltransferase RlmN.